We begin with the raw amino-acid sequence, 146 residues long: Prolactin-inducible protein homolog (146 aa).

The N-terminal stretch at 1 to 28 is a signal peptide; that stretch reads MRLLQLLFRASPATLLLVLCLQLGANKA. The residue at position 29 (Q29) is a Pyrrolidone carboxylic acid. 2 disulfide bridges follow: C65–C91 and C89–C123. The N-linked (GlcNAc...) asparagine glycan is linked to N105.

This sequence belongs to the PIP family. As to quaternary structure, monomer. Interacts with AZGP1.

The protein localises to the secreted. The chain is Prolactin-inducible protein homolog (PIP) from Gorilla gorilla gorilla (Western lowland gorilla).